Reading from the N-terminus, the 323-residue chain is Phospho-N-acetylmuramoyl-pentapeptide-transferase (323 aa).

9 consecutive transmembrane segments (helical) span residues 3–23 (NILL…PALI), 52–72 (MGGL…SWVL), 77–97 (MLPT…LGMW), 121–141 (IVGA…MALH), 145–165 (IGNW…LVGF), 175–195 (LDGL…IVAW), 200–220 (INIA…LIFN), 226–248 (IFMG…ILLH), and 301–321 (IDLT…WVIL).

It belongs to the glycosyltransferase 4 family. MraY subfamily. Mg(2+) serves as cofactor.

It localises to the cell membrane. The enzyme catalyses UDP-N-acetyl-alpha-D-muramoyl-L-alanyl-gamma-D-glutamyl-L-lysyl-D-alanyl-D-alanine + di-trans,octa-cis-undecaprenyl phosphate = Mur2Ac(oyl-L-Ala-gamma-D-Glu-L-Lys-D-Ala-D-Ala)-di-trans,octa-cis-undecaprenyl diphosphate + UMP. The protein operates within cell wall biogenesis; peptidoglycan biosynthesis. In terms of biological role, catalyzes the initial step of the lipid cycle reactions in the biosynthesis of the cell wall peptidoglycan: transfers peptidoglycan precursor phospho-MurNAc-pentapeptide from UDP-MurNAc-pentapeptide onto the lipid carrier undecaprenyl phosphate, yielding undecaprenyl-pyrophosphoryl-MurNAc-pentapeptide, known as lipid I. This is Phospho-N-acetylmuramoyl-pentapeptide-transferase from Levilactobacillus brevis (strain ATCC 367 / BCRC 12310 / CIP 105137 / JCM 1170 / LMG 11437 / NCIMB 947 / NCTC 947) (Lactobacillus brevis).